Reading from the N-terminus, the 160-residue chain is Transcriptional repressor NrdR (160 aa).

The span at 1–11 shows a compositional bias: polar residues; sequence MRCPNCNSLDT. Residues 1–20 form a disordered region; it reads MRCPNCNSLDTQVKDSRPTE. A zinc finger spans residues 3-34; that stretch reads CPNCNSLDTQVKDSRPTEDSSVIRRRRVCVAC. The ATP-cone domain occupies 49–139; it reads LTVIKRNGRR…VYRNFREAKD (91 aa).

The protein belongs to the NrdR family. The cofactor is Zn(2+).

Negatively regulates transcription of bacterial ribonucleotide reductase nrd genes and operons by binding to NrdR-boxes. The protein is Transcriptional repressor NrdR of Bradyrhizobium diazoefficiens (strain JCM 10833 / BCRC 13528 / IAM 13628 / NBRC 14792 / USDA 110).